Consider the following 139-residue polypeptide: NADPH-dependent 7-cyano-7-deazaguanine reductase (139 aa).

Cys-34 functions as the Thioimide intermediate in the catalytic mechanism. Asp-41 functions as the Proton donor in the catalytic mechanism. Residues 56–58 (VEL) and 75–76 (HE) contribute to the substrate site.

Belongs to the GTP cyclohydrolase I family. QueF type 1 subfamily.

It is found in the cytoplasm. It catalyses the reaction 7-aminomethyl-7-carbaguanine + 2 NADP(+) = 7-cyano-7-deazaguanine + 2 NADPH + 3 H(+). Its pathway is tRNA modification; tRNA-queuosine biosynthesis. Catalyzes the NADPH-dependent reduction of 7-cyano-7-deazaguanine (preQ0) to 7-aminomethyl-7-deazaguanine (preQ1). The sequence is that of NADPH-dependent 7-cyano-7-deazaguanine reductase from Methylobacillus flagellatus (strain ATCC 51484 / DSM 6875 / VKM B-1610 / KT).